A 69-amino-acid polypeptide reads, in one-letter code: Sodium channel toxin (69 aa).

An LCN-type CS-alpha/beta domain is found at 2 to 66; that stretch reads KNDYPVDTAK…SPTKTSGRCN (65 aa). 4 cysteine pairs are disulfide-bonded: Cys14-Cys65, Cys18-Cys41, Cys27-Cys48, and Cys31-Cys50.

Belongs to the long (4 C-C) scorpion toxin superfamily. Sodium channel inhibitor family. In terms of tissue distribution, expressed by the venom gland.

It localises to the secreted. Functionally, inhibits voltage-gated sodium channels (Nav). This is Sodium channel toxin from Tityus metuendus (Scorpion).